A 294-amino-acid chain; its full sequence is Protein PET54 (294 aa).

The protein resides in the mitochondrion inner membrane. In terms of biological role, activator of specific mitochondrial mRNAs. PET54 is involved in the excision of intron aI5-beta from pre-mRNA for cytochrome c oxidase I (COX1) and plays a role in promoting the translation of COX3. This Saccharomyces bayanus (Yeast) protein is Protein PET54 (PET54).